The chain runs to 201 residues: dTTP/UTP pyrophosphatase (201 aa).

The active-site Proton acceptor is Asp81.

The protein belongs to the Maf family. YhdE subfamily. A divalent metal cation serves as cofactor.

The protein localises to the cytoplasm. The enzyme catalyses dTTP + H2O = dTMP + diphosphate + H(+). It carries out the reaction UTP + H2O = UMP + diphosphate + H(+). Functionally, nucleoside triphosphate pyrophosphatase that hydrolyzes dTTP and UTP. May have a dual role in cell division arrest and in preventing the incorporation of modified nucleotides into cellular nucleic acids. The polypeptide is dTTP/UTP pyrophosphatase (Bordetella avium (strain 197N)).